The chain runs to 145 residues: D-aminoacyl-tRNA deacylase (145 aa).

The short motif at 137-138 (GP) is the Gly-cisPro motif, important for rejection of L-amino acids element.

The protein belongs to the DTD family. As to quaternary structure, homodimer.

It localises to the cytoplasm. The enzyme catalyses glycyl-tRNA(Ala) + H2O = tRNA(Ala) + glycine + H(+). The catalysed reaction is a D-aminoacyl-tRNA + H2O = a tRNA + a D-alpha-amino acid + H(+). In terms of biological role, an aminoacyl-tRNA editing enzyme that deacylates mischarged D-aminoacyl-tRNAs. Also deacylates mischarged glycyl-tRNA(Ala), protecting cells against glycine mischarging by AlaRS. Acts via tRNA-based rather than protein-based catalysis; rejects L-amino acids rather than detecting D-amino acids in the active site. By recycling D-aminoacyl-tRNA to D-amino acids and free tRNA molecules, this enzyme counteracts the toxicity associated with the formation of D-aminoacyl-tRNA entities in vivo and helps enforce protein L-homochirality. The chain is D-aminoacyl-tRNA deacylase from Serratia proteamaculans (strain 568).